A 516-amino-acid polypeptide reads, in one-letter code: BAR/IMD domain-containing adapter protein 2-like 1 (516 aa).

An IMD domain is found at 1–249; the sequence is MSRGPEEVNR…MNMIEEIKTP (249 aa). Residues 115–148 adopt a coiled-coil conformation; it reads MNATLKRYQAEHRNKLDSLEKSQAELKKIRRKSQ. 2 positions are modified to phosphothreonine: Thr-248 and Thr-257. A phosphoserine mark is found at Ser-261 and Ser-281. The disordered stretch occupies residues 303–328; it reads NPATAGQSAEKTNNSTANTGDDPSLQ. Position 332 is a phosphoserine (Ser-332). Residues 340–403 form the SH3 domain; the sequence is MKKQKVKTIF…PSSYTKLLEE (64 aa). Thr-413 is modified (phosphothreonine). Phosphoserine occurs at positions 415, 421, and 423. Residues 454 to 516 form a disordered region; sequence ADAAKIPSTS…TNDRSAPIIR (63 aa). Polar residues predominate over residues 474–485; it reads ATSTSPSDSNGT. The binds F-actin stretch occupies residues 488-516; it reads PPFLSGENPFATVKLRPTVTNDRSAPIIR.

In terms of assembly, interacts with RAC1. Binds to F-actin. Interacts with FASLG. In terms of processing, phosphorylated on tyrosine in response to insulin.

It localises to the cytoplasm. Its subcellular location is the cytoskeleton. May function as adapter protein. Involved in the formation of clusters of actin bundles. Plays a role in the reorganization of the actin cytoskeleton in response to bacterial infection. This chain is BAR/IMD domain-containing adapter protein 2-like 1 (Baiap2l1), found in Rattus norvegicus (Rat).